A 478-amino-acid polypeptide reads, in one-letter code: MRKYEGSNDPYTDPETGVMYNLLGIKDQARLERVESAFAYIRSFELGRTSISGKFDLDHMKKIHKKLFGDVYEWAGKTRLVDIVKDNSKFAHYTQIESYAPQITQQLAREQHLRGLDANEFSQRAGYYMGELNALHPFREGNGRTLREFIWQLAREAGYHIDWDRVERQEMTRASIESYYGNSDLMSALIRRNLTEFTVNRRVDVSQGINERVLSHIDIDKEWPQKGFNIAIQTTQQAPYLSSYTDTSNLEEKAQNALRNEQSYVDTFKELNDHLKTIYKDPQAAALKIEQTILAGKGDKLPDILAKAPNKVGELRGSDRLIDKLKSAGKERKAALYNVPLAISTIRRLQSFYKNSYEKHMDKLTREREQLKVEVPSLSQEAVAYMKNVEVGRNNYSKIPENINKEFVQLESALNRRFGKDVIYKRNFNLSKEIASKQTYDKKLVNELQTAIKFLQQRHIQKQNNLAITRTPSKGITR.

The Fido domain occupies 55-200 (FDLDHMKKIH…RRNLTEFTVN (146 aa)). ATP-binding positions include 85 to 88 (KDNS), 133 to 136 (NALH), 140 to 147 (EGNGRTLR), and Ser175.

As to quaternary structure, homodimer. Interacts with VbhA.

The enzyme catalyses L-tyrosyl-[protein] + ATP = O-(5'-adenylyl)-L-tyrosyl-[protein] + diphosphate. The catalysed reaction is L-threonyl-[protein] + ATP = 3-O-(5'-adenylyl)-L-threonyl-[protein] + diphosphate. Its activity is regulated as follows. Adenylyltransferase activity is inhibited by antitoxin VbhA; which acts by competing with ATP-binding at Arg-147 and prevents productive ATP-binding. In terms of biological role, toxic component of type II toxin-antitoxin (TA) system VbhT-VbhA. Adenylyltransferase involved in virulence by mediating the addition of adenosine 5'-monophosphate (AMP) to specific residue of host GTPases. The resulting AMPylation affects GTPases, impairing actin assembly in infected cells. This Bartonella schoenbuchensis (strain DSM 13525 / NCTC 13165 / R1) protein is Protein adenylyltransferase VbhT (vbhT).